Here is a 71-residue protein sequence, read N- to C-terminus: Translational regulator CsrA (71 aa).

Belongs to the CsrA/RsmA family. In terms of assembly, homodimer; the beta-strands of each monomer intercalate to form a hydrophobic core, while the alpha-helices form wings that extend away from the core.

The protein resides in the cytoplasm. Functionally, a key translational regulator that binds mRNA to regulate translation initiation and/or mRNA stability. Mediates global changes in gene expression, shifting from rapid growth to stress survival by linking envelope stress, the stringent response and the catabolite repression systems. Usually binds in the 5'-UTR; binding at or near the Shine-Dalgarno sequence prevents ribosome-binding, repressing translation, binding elsewhere in the 5'-UTR can activate translation and/or stabilize the mRNA. Its function is antagonized by small RNA(s). The polypeptide is Translational regulator CsrA (Pseudoalteromonas atlantica (strain T6c / ATCC BAA-1087)).